The following is a 36-amino-acid chain: Fructose-1,6-/sedoheptulose-1,7-bisphosphate aldolase (36 aa).

This chain is Fructose-1,6-/sedoheptulose-1,7-bisphosphate aldolase (cbbA), found in Nitrobacter vulgaris.